A 602-amino-acid chain; its full sequence is DEAD-box ATP-dependent RNA helicase 53 (602 aa).

The span at 33–43 shows a compositional bias: low complexity; it reads ASPLDPCRGPA. The segment at 33-76 is disordered; sequence ASPLDPCRGPAAPEPPRRRAFHGSPSPLGFRSTPASWSSPEAGA. Residues 84 to 112 carry the Q motif motif; it reads LEVARLGISPWIVERLAARGITRLFPIQR. Positions 115–288 constitute a Helicase ATP-binding domain; it reads LDPAMQGKDM…SKYLKDPIII (174 aa). 128–135 contributes to the ATP binding site; the sequence is ARTGTGKT. The DEAD box signature appears at 236–239; it reads DEAD. In terms of domain architecture, Helicase C-terminal spans 317 to 462; that stretch reads ILGPLIKEHA…LPKIEVADEA (146 aa). The segment at 503–602 is disordered; the sequence is FGDFDGFGSS…GRSGGFDDSN (100 aa).

It belongs to the DEAD box helicase family. DDX21/DDX50 subfamily.

The catalysed reaction is ATP + H2O = ADP + phosphate + H(+). The polypeptide is DEAD-box ATP-dependent RNA helicase 53 (Oryza sativa subsp. japonica (Rice)).